The chain runs to 251 residues: Ditrans,polycis-undecaprenyl-diphosphate synthase ((2E,6E)-farnesyl-diphosphate specific) (251 aa).

D21 is an active-site residue. Residue D21 coordinates Mg(2+). Substrate is bound by residues 22-25 (GNNR), W26, H38, and 66-68 (SSE). Residue N69 is the Proton acceptor of the active site. Substrate-binding positions include W70, R72, R189, and 195–197 (RIS). Residue E208 coordinates Mg(2+).

This sequence belongs to the UPP synthase family. As to quaternary structure, homodimer. Mg(2+) serves as cofactor.

The catalysed reaction is 8 isopentenyl diphosphate + (2E,6E)-farnesyl diphosphate = di-trans,octa-cis-undecaprenyl diphosphate + 8 diphosphate. Its function is as follows. Catalyzes the sequential condensation of isopentenyl diphosphate (IPP) with (2E,6E)-farnesyl diphosphate (E,E-FPP) to yield (2Z,6Z,10Z,14Z,18Z,22Z,26Z,30Z,34E,38E)-undecaprenyl diphosphate (di-trans,octa-cis-UPP). UPP is the precursor of glycosyl carrier lipid in the biosynthesis of bacterial cell wall polysaccharide components such as peptidoglycan and lipopolysaccharide. The sequence is that of Ditrans,polycis-undecaprenyl-diphosphate synthase ((2E,6E)-farnesyl-diphosphate specific) from Pseudomonas syringae pv. tomato (strain ATCC BAA-871 / DC3000).